The following is a 151-amino-acid chain: RNA polymerase-binding transcription factor DksA (151 aa).

The Zn(2+) site is built by Cys114, Cys117, Cys135, and Cys138. The dksA C4-type zinc-finger motif lies at 114 to 138 (CNSCAVEIGIRRLEARPTANLCIDC).

This sequence belongs to the DksA family. Interacts directly with the RNA polymerase.

The protein resides in the cytoplasm. Functionally, transcription factor that acts by binding directly to the RNA polymerase (RNAP). Required for negative regulation of rRNA expression and positive regulation of several amino acid biosynthesis promoters. Also required for regulation of fis expression. The chain is RNA polymerase-binding transcription factor DksA from Buchnera aphidicola subsp. Schizaphis graminum (strain Sg).